The chain runs to 374 residues: Ribosomal RNA large subunit methyltransferase G (374 aa).

It belongs to the methyltransferase superfamily. RlmG family.

The protein localises to the cytoplasm. The enzyme catalyses guanosine(1835) in 23S rRNA + S-adenosyl-L-methionine = N(2)-methylguanosine(1835) in 23S rRNA + S-adenosyl-L-homocysteine + H(+). Functionally, specifically methylates the guanine in position 1835 (m2G1835) of 23S rRNA. This is Ribosomal RNA large subunit methyltransferase G from Pseudomonas syringae pv. tomato (strain ATCC BAA-871 / DC3000).